A 1271-amino-acid chain; its full sequence is SR-related and CTD-associated factor 8 (1271 aa).

The CID domain occupies Met1–Pro139. Phosphothreonine is present on Thr6. A Glycyl lysine isopeptide (Lys-Gly) (interchain with G-Cter in SUMO1) cross-link involves residue Lys18. The segment covering Gly270–Ile283 has biased composition (basic and acidic residues). 3 disordered regions span residues Gly270 to Ser289, Gln322 to His354, and Glu384 to Arg468. Ser273 is modified (phosphoserine). Residues Lys327–His354 show a composition bias toward polar residues. The segment covering Val394–Ser443 has biased composition (basic residues). Basic and acidic residues predominate over residues Ser447–Lys461. The region spanning Thr477 to Asn551 is the RRM domain. Thr615 is modified (phosphothreonine). Phosphoserine occurs at positions 617 and 779. Residues Thr899 to Met918 form a disordered region. Over residues Pro902 to Ser912 the composition is skewed to pro residues. Asymmetric dimethylarginine is present on residues Arg917, Arg927, and Arg938. 2 stretches are compositionally biased toward pro residues: residues Gly945 to Ser956 and His963 to Pro972. Positions Gly945–Pro1064 are disordered. Composition is skewed to basic and acidic residues over residues Glu1011 to Ile1027 and Asp1034 to Pro1064. An Asymmetric dimethylarginine modification is found at Arg1073. Positions Tyr1198–Thr1271 are disordered. Residues Ala1255 to Thr1271 show a composition bias toward acidic residues.

Interacts with POLR2A; via C-terminal heptapeptide repeat domain (CTD) phosphorylated at 'Ser-2' and 'Ser-5'. Identified in a complex with CDC5L and other spliceosomal proteins.

The protein localises to the nucleus. Its subcellular location is the nucleus matrix. Its function is as follows. Anti-terminator protein required to prevent early mRNA termination during transcription. Together with SCAF4, acts by suppressing the use of early, alternative poly(A) sites, thereby preventing the accumulation of non-functional truncated proteins. Mechanistically, associates with the phosphorylated C-terminal heptapeptide repeat domain (CTD) of the largest RNA polymerase II subunit (POLR2A), and subsequently binds nascent RNA upstream of early polyadenylation sites to prevent premature mRNA transcript cleavage and polyadenylation. Independently of SCAF4, also acts as a positive regulator of transcript elongation. The sequence is that of SR-related and CTD-associated factor 8 from Homo sapiens (Human).